The sequence spans 337 residues: MLQYDKDVVLSSRIRLARNVKDIPFPTVMTEEQGKKVIELARKAILGSNTILSTQFTEYEMKKLTPLDRQALVEKHLISPDLSQNIKTGYALIKDDNTVSIMVNEEDHLRIQCILPGLKLDESWDMADKIDDLIEETIDYAYDEKIGYLTSCPTNVGTGIRASVMVHLPALTITGQISNILNSVSKIGMAVRGIYGEGTQALGDIYQISNQVTLGQSEKEIIENIEGVAKQIISSERRAREELYKKQRVQIEDRVGRAFGILSHAKVMSTKEYMTLMSDVRLGIVLGILSVDLDKLDRLTTQIQPANLQKIYGMQLNPYERDVKRAEYVSTQLNKKE.

In terms of domain architecture, Phosphagen kinase C-terminal spans 8–239 (VVLSSRIRLA…KQIISSERRA (232 aa)). ATP contacts are provided by residues 11-15 (SSRIR), histidine 76, arginine 110, 161-165 (RASVM), and 192-197 (RGIYGE). The RDXXRA motif of the pArg binding pocket involved in allosteric regulation signature appears at 321-326 (RDVKRA).

This sequence belongs to the ATP:guanido phosphotransferase family.

The catalysed reaction is L-arginyl-[protein] + ATP = N(omega)-phospho-L-arginyl-[protein] + ADP + H(+). Its activity is regulated as follows. Appears to be allosterically activated by the binding of pArg-containing polypeptides to the pArg-binding pocket localized in the C-terminal domain of McsB. Functionally, catalyzes the specific phosphorylation of arginine residues in proteins. This Caldanaerobacter subterraneus subsp. tengcongensis (strain DSM 15242 / JCM 11007 / NBRC 100824 / MB4) (Thermoanaerobacter tengcongensis) protein is Protein-arginine kinase.